Reading from the N-terminus, the 298-residue chain is MTSGAAAAGRTPTWKERENNKRRERRRRAIAAKIFTGLRALGNYNLPKHCDNNEVLKALCREAGWVVEDDGTTYRKGCKPPPSSAGGASVGMSPCSSTQLLSAPSSSFPSPVPSYHASPASSSFPSPSRIDNPSASCLLPFLRGLPNLPPLRVSSSAPVTPPLSSPTASRPPKIRKPDWDVDPFRHPFFAVSAPASPTRGRRLEHPDTIPECDESDVSTVDSGRWISFQMATTAPTSPTYNLVNPGASTSNSMEIEGTAGRGGAEFEFDKGRVTPWEGERIHEVAAEELELTLGVGAK.

4 disordered regions span residues M1 to R25, G71 to R129, V153 to R175, and A190 to V217. The segment at R10–G91 is required for DNA-binding. Over residues S96–S128 the composition is skewed to low complexity. Residue S156 is modified to Phosphoserine. Residues E204–R224 are PEST-like.

The protein belongs to the BZR/LAT61 family. Interacts with GF14C. Interacts with PUB24. Interacts with SMOS1. Phosphorylated on serine and threonine residues by GSK2. Dephosphorylated during response to brassinosteroid. In terms of processing, ubiquitinated by PUB24. Ubiquitination leads to its subsequent degradation by the 26S proteasome, thus reducing sensitivity to brassinosteroid signaling.

The protein resides in the nucleus. The protein localises to the cytoplasm. Functionally, positive brassinosteroid-signaling protein. Mediates downstream brassinosteroid-regulated growth response and feedback inhibition of brassinosteroid (BR) biosynthetic genes. May act as transcriptional repressor by binding the brassinosteroid-response element (BREE) (5'-CGTG(T/C)G-3') in the promoter of DLT (AC Q9LWU9), another positive regulator of BR signaling. Acts as a transcriptional repressor of LIC, a negative regulator of BR signaling, by binding to the BRRE element of its promoter. BZR1 and LIC play opposite roles in BR signaling and regulation of leaf bending. The polypeptide is Protein BZR1 homolog 1 (Oryza sativa subsp. japonica (Rice)).